Consider the following 94-residue polypeptide: Integration host factor subunit beta (94 aa).

It belongs to the bacterial histone-like protein family. Heterodimer of an alpha and a beta chain.

In terms of biological role, this protein is one of the two subunits of integration host factor, a specific DNA-binding protein that functions in genetic recombination as well as in transcriptional and translational control. In Dickeya dadantii (strain 3937) (Erwinia chrysanthemi (strain 3937)), this protein is Integration host factor subunit beta (ihfB).